The primary structure comprises 433 residues: MNRLLIRGATILTMEGPEAIIETGELLIEDGWITHVGLPGSASGSFDMDEVIEADGQVAMPGFINCHTHAAMTLLRGYADDLPLMTWLSEKIWPFEGRMTNEDIYWGTMLACLEMIKSGTTCFGDMYDCMHDVARAVEKTGMRAMLSRGMIGIAPTADKALIEAEELARNWNGKADGRITVMVAPHAPYTCPPDYLDKAMNLAAKHKLGINIHLAETLTEFEDIKKQYGKTPVKHLDQLGLFKLPVLAAHCVHLDEEDMDILAQKAMGVAYNPQSNMKLASGIAPVAKLLELGATVGIGTDGTASNNNLDMLEELRAGSFLQKVSTMNPEVIPAYRALQMATIDGALCMGLGDRVGLIKEGMRGDVILLDTQQPHMCPRHNLVANIAYAANSSDVRTVVIDGKVVMLDRVVKTIDEERVMYEVRERAARLAGK.

The Zn(2+) site is built by histidine 67 and histidine 69. Substrate contacts are provided by glutamate 96, arginine 148, and histidine 186. Histidine 213 lines the Zn(2+) pocket. Glutamate 216 and aspartate 301 together coordinate substrate. Aspartate 301 serves as a coordination point for Zn(2+).

The protein belongs to the metallo-dependent hydrolases superfamily. MTA/SAH deaminase family. The cofactor is Zn(2+).

It carries out the reaction S-adenosyl-L-homocysteine + H2O + H(+) = S-inosyl-L-homocysteine + NH4(+). The catalysed reaction is S-methyl-5'-thioadenosine + H2O + H(+) = S-methyl-5'-thioinosine + NH4(+). Catalyzes the deamination of 5-methylthioadenosine and S-adenosyl-L-homocysteine into 5-methylthioinosine and S-inosyl-L-homocysteine, respectively. Is also able to deaminate adenosine. The sequence is that of 5-methylthioadenosine/S-adenosylhomocysteine deaminase from Desulforamulus reducens (strain ATCC BAA-1160 / DSM 100696 / MI-1) (Desulfotomaculum reducens).